We begin with the raw amino-acid sequence, 431 residues long: Gamma-glutamyl phosphate reductase (431 aa).

It belongs to the gamma-glutamyl phosphate reductase family.

It is found in the cytoplasm. It carries out the reaction L-glutamate 5-semialdehyde + phosphate + NADP(+) = L-glutamyl 5-phosphate + NADPH + H(+). Its pathway is amino-acid biosynthesis; L-proline biosynthesis; L-glutamate 5-semialdehyde from L-glutamate: step 2/2. In terms of biological role, catalyzes the NADPH-dependent reduction of L-glutamate 5-phosphate into L-glutamate 5-semialdehyde and phosphate. The product spontaneously undergoes cyclization to form 1-pyrroline-5-carboxylate. The polypeptide is Gamma-glutamyl phosphate reductase (Methylobacterium sp. (strain 4-46)).